We begin with the raw amino-acid sequence, 690 residues long: Rho guanine nucleotide exchange factor 4 (690 aa).

The interval 73-126 is ABR (APC-binding region) domain; sequence KTQRKKLQKQAHVERRLHIGAVHKDGVKCWRKTIITSPESLNLPRRSHPLSQSA. A disordered region spans residues 113–145; that stretch reads LNLPRRSHPLSQSAPTGLNHMGWPEHTPGTAMP. Positions 194–253 constitute an SH3 domain; the sequence is GSVVCAEALWDHVTMDDQELGFKAGDVIEVMDATNREWWWGRVADGEGWFPASFVRLRVN. Residues 257–282 are disordered; that stretch reads PADDDAPLAGNSGAEDGGAEAQSSKD. The DH domain occupies 284–468; sequence MRTNVINEIL…KNVAQLINER (185 aa). The 108-residue stretch at 499 to 606 folds into the PH domain; that stretch reads ELIYSGELTR…WLKAFARERE (108 aa).

As to quaternary structure, isoform 3 interacts with RHOA and RAC1, and (via ABR domain) with APC. Found in a complex consisting of ARHGEF4, APC and CTNNB1. As to expression, expressed at high levels in the brain, skeletal muscle and testis and at low levels in the kidney, lung, small intestine, ovary and prostate. Expression is aberrantly enhanced in most colorectal tumors.

Its subcellular location is the cytoplasm. It is found in the cell projection. It localises to the ruffle membrane. Acts as a guanine nucleotide exchange factor (GEF) for RHOA, RAC1 and CDC42 GTPases. Binding of APC may activate RAC1 GEF activity. The APC-ARHGEF4 complex seems to be involved in cell migration as well as in E-cadherin-mediated cell-cell adhesion. Required for MMP9 up-regulation via the JNK signaling pathway in colorectal tumor cells. Involved in tumor angiogenesis and may play a role in intestinal adenoma formation and tumor progression. The protein is Rho guanine nucleotide exchange factor 4 (ARHGEF4) of Homo sapiens (Human).